Here is a 296-residue protein sequence, read N- to C-terminus: Aspartate carbamoyltransferase catalytic subunit (296 aa).

Arg-50 and Thr-51 together coordinate carbamoyl phosphate. Lys-79 serves as a coordination point for L-aspartate. Residues Arg-100, His-128, and Gln-131 each contribute to the carbamoyl phosphate site. L-aspartate is bound by residues Arg-161 and Arg-219. Positions 258 and 259 each coordinate carbamoyl phosphate.

The protein belongs to the aspartate/ornithine carbamoyltransferase superfamily. ATCase family. As to quaternary structure, heterooligomer of catalytic and regulatory chains.

It carries out the reaction carbamoyl phosphate + L-aspartate = N-carbamoyl-L-aspartate + phosphate + H(+). It participates in pyrimidine metabolism; UMP biosynthesis via de novo pathway; (S)-dihydroorotate from bicarbonate: step 2/3. In terms of biological role, catalyzes the condensation of carbamoyl phosphate and aspartate to form carbamoyl aspartate and inorganic phosphate, the committed step in the de novo pyrimidine nucleotide biosynthesis pathway. The chain is Aspartate carbamoyltransferase catalytic subunit from Korarchaeum cryptofilum (strain OPF8).